The following is a 488-amino-acid chain: 1-deoxy-D-xylulose 5-phosphate reductoisomerase, apicoplastic (488 aa).

An apicoplast-targeting transit peptide spans 1–72 (MKKYIYIYFF…LCKKDLIDIG (72 aa)). NADP(+)-binding positions include 86–89 (TGSI) and 115–117 (NKS). Lys-205 lines the 1-deoxy-D-xylulose 5-phosphate pocket. Glu-206 is a binding site for NADP(+). Asp-231 serves as a coordination point for Mn(2+). Ser-232, Glu-233, Ser-270, and His-293 together coordinate 1-deoxy-D-xylulose 5-phosphate. Glu-233 contributes to the Mn(2+) binding site. Gly-299 provides a ligand contact to NADP(+). 1-deoxy-D-xylulose 5-phosphate contacts are provided by Ser-306, Asn-311, Lys-312, and Glu-315. Residue Glu-315 coordinates Mn(2+).

It belongs to the DXR family. In terms of assembly, homodimer. Mg(2+) serves as cofactor. The cofactor is Mn(2+).

The protein localises to the plastid. Its subcellular location is the apicoplast. It carries out the reaction 2-C-methyl-D-erythritol 4-phosphate + NADP(+) = 1-deoxy-D-xylulose 5-phosphate + NADPH + H(+). It participates in isoprenoid biosynthesis; isopentenyl diphosphate biosynthesis via DXP pathway; isopentenyl diphosphate from 1-deoxy-D-xylulose 5-phosphate: step 1/6. Its activity is regulated as follows. Inhibited by fosmidomycin and its derivatives. Functionally, catalyzes the NADPH-dependent rearrangement and reduction of 1-deoxy-D-xylulose-5-phosphate (DXP) to 2-C-methyl-D-erythritol 4-phosphate (MEP). This Plasmodium falciparum (isolate 3D7) protein is 1-deoxy-D-xylulose 5-phosphate reductoisomerase, apicoplastic (DXR).